Consider the following 219-residue polypeptide: EP300-interacting inhibitor of differentiation 2 (219 aa).

A disordered region spans residues 1-71; the sequence is MSELPADQGV…PVPEAREGPM (71 aa). Over residues 20–34 the composition is skewed to basic and acidic residues; sequence GDVRQAEVGGRRREP. An Omega-N-methylarginine modification is found at R75. Residues 95–115 are disordered; sequence AEPAEEEGPEGRPRSRPGNGP.

In terms of assembly, heterodimer with EID2B. Interacts with the C-terminus of EP300. Interacts with HDAC1 and HDAC2. Interacts with SMAD2, SMAD4 and with the MH2 domain of SMAD3.

Its subcellular location is the nucleus. In terms of biological role, interacts with EP300 and acts as a repressor of MYOD-dependent transcription and muscle differentiation. Inhibits EP300 histone acetyltransferase activity. Acts as a repressor of TGFB/SMAD transcriptional responses. May act as a repressor of the TGFB/SMAD3-dependent signaling by selectively blocking formation of TGFB-induced SMAD3-SMAD4 complex. This Bos taurus (Bovine) protein is EP300-interacting inhibitor of differentiation 2.